The primary structure comprises 1726 residues: Probable serine/threonine-protein kinase roco4 (1726 aa).

4 LRR repeats span residues 256–277, 280–301, 303–324, and 326–347; these read KGKR…ITQM, HLVE…IQLL, SLRI…ICYL, and DLKI…VVQS. A Roc domain is found at 364-544; sequence KSETWNKVKL…KRLIHEAEKS (181 aa). Residues 377–384, 428–432, and 487–490 each bind GTP; these read GQEGVGKT, DFGGQ, and THSD. The region spanning 591–787 is the COR domain; it reads AINSQKERYI…RTYWRNGVLL (197 aa). The span at 800–881 shows a compositional bias: low complexity; it reads SKQQQLQQQQ…STLNSQQLIN (82 aa). The interval 800–890 is disordered; it reads SKQQQLQQQQ…NPSVSPLSST (91 aa). In terms of domain architecture, Protein kinase spans 1026–1292; the sequence is IEYEKQIGKG…SYIVKELSEL (267 aa). Residues 1032 to 1040 and Lys1055 each bind ATP; that span reads IGKGGFGLV. Asp1154 (proton acceptor) is an active-site residue. Positions 1319-1331 are enriched in polar residues; it reads ASTSSNADDGSQT. A disordered region spans residues 1319 to 1385; that stretch reads ASTSSNADDG…SSPSTSFINS (67 aa). The segment covering 1332-1348 has biased composition (low complexity); the sequence is NNNNNNNNNNNNNNNNN. Over residues 1349–1364 the composition is skewed to polar residues; the sequence is SGSSIALSPSRSFEQQ. Positions 1365 to 1381 are enriched in low complexity; it reads TTTTTTTTTSPSSPSTS. WD repeat units lie at residues 1422 to 1461, 1463 to 1502, 1506 to 1546, 1589 to 1627, 1633 to 1670, and 1674 to 1714; these read SVHK…LINE, KCPH…IVQQ, PHKG…KKHS, KHST…ELQK, AHHE…KPFT, and HHKQ…EKKT.

This sequence belongs to the protein kinase superfamily. TKL Ser/Thr protein kinase family. ROCO subfamily.

It catalyses the reaction L-seryl-[protein] + ATP = O-phospho-L-seryl-[protein] + ADP + H(+). The enzyme catalyses L-threonyl-[protein] + ATP = O-phospho-L-threonyl-[protein] + ADP + H(+). In Dictyostelium discoideum (Social amoeba), this protein is Probable serine/threonine-protein kinase roco4 (roco4).